The chain runs to 39 residues: Ribonuclease UK114 (39 aa).

The protein belongs to the RutC family. Monomer. The N-terminus may be blocked. Mainly expressed in the liver and kidney. Lower expression found in intestine, gizzard, glandular stomach, heart, brain and spleen.

Its subcellular location is the cytoplasm. Functionally, endoribonuclease responsible for the inhibition of the translation by cleaving mRNA. Inhibits cell-free protein synthesis. Cleaves phosphodiester bonds only in single-stranded RNA. This Gallus gallus (Chicken) protein is Ribonuclease UK114.